Reading from the N-terminus, the 240-residue chain is MGGYSVTYSNFVKDPYKDWFPDDETNGASKILQWAYEVYGTDIVYACSFGAEGMVLIDLISKTQKNADIVFLDTDLHFQETYDLIEDIKVKYPTLNIHIKKPDLTLEEQAAEHGSALWKRQPDQCCYIRKIKPLEDALSGAPAWISGLRREQSVSRSKTDFINKDERFKSIKVCPLIHWTWDDVWEYIKDNNLPYNELHDNGYPSIGCIPCTSQVSDSSDSRAGRWAGTQKTECGLHTSD.

[4Fe-4S] cluster-binding residues include Cys125, Cys126, Cys208, and Cys211. The active-site Nucleophile; cysteine thiosulfonate intermediate is Cys234.

This sequence belongs to the PAPS reductase family. CysH subfamily. The cofactor is [4Fe-4S] cluster.

The protein resides in the cytoplasm. It catalyses the reaction [thioredoxin]-disulfide + sulfite + AMP + 2 H(+) = adenosine 5'-phosphosulfate + [thioredoxin]-dithiol. It participates in sulfur metabolism; hydrogen sulfide biosynthesis; sulfite from sulfate. Functionally, catalyzes the formation of sulfite from adenosine 5'-phosphosulfate (APS) using thioredoxin as an electron donor. This chain is Adenosine 5'-phosphosulfate reductase, found in Oceanobacillus iheyensis (strain DSM 14371 / CIP 107618 / JCM 11309 / KCTC 3954 / HTE831).